The following is a 214-amino-acid chain: Adenylate kinase (214 aa).

Residue 10-15 participates in ATP binding; sequence GSGKGT. The segment at 30-59 is NMP; that stretch reads STGDMLRAAVREGTPLGMEAKKIMDAGQLV. AMP is bound by residues Thr-31, Arg-36, 57 to 59, 85 to 88, and Gln-92; these read QLV and GFPR. The LID stretch occupies residues 122-159; that stretch reads GRRVHPASGRTYHVVFNPPKVEGRDDETGEPLVQREDD. ATP is bound by residues Arg-123 and 132–133; that span reads TY. Arg-156 and Arg-167 together coordinate AMP. Gly-200 contributes to the ATP binding site.

Belongs to the adenylate kinase family. Monomer.

The protein resides in the cytoplasm. The catalysed reaction is AMP + ATP = 2 ADP. It participates in purine metabolism; AMP biosynthesis via salvage pathway; AMP from ADP: step 1/1. Catalyzes the reversible transfer of the terminal phosphate group between ATP and AMP. Plays an important role in cellular energy homeostasis and in adenine nucleotide metabolism. In Methylococcus capsulatus (strain ATCC 33009 / NCIMB 11132 / Bath), this protein is Adenylate kinase.